The sequence spans 150 residues: UPF0336 protein SCO4636 (150 aa).

Positions V8–A116 constitute a MaoC-like domain.

The protein belongs to the UPF0336 family.

This is UPF0336 protein SCO4636 from Streptomyces coelicolor (strain ATCC BAA-471 / A3(2) / M145).